The chain runs to 272 residues: Undecaprenyl-diphosphatase (272 aa).

7 helical membrane-spanning segments follow: residues 2 to 22, 43 to 63, 82 to 102, 110 to 130, 185 to 205, 224 to 244, and 252 to 272; these read FDIIKAVIIGIVEGLTEFLPI, FISMFEYVIQFGAILAVVLLY, WQLWAKVIIAVLPSAVVGLPL, LHTPIVVATTLIVYGILFIIL, YVATEFSFFLAIPTMVGVLII, VLMTGSIVSFLVAIVAIKWLL, and FKPFGWYRIALGAIVLLVMFI.

The protein belongs to the UppP family.

The protein resides in the cell membrane. It carries out the reaction di-trans,octa-cis-undecaprenyl diphosphate + H2O = di-trans,octa-cis-undecaprenyl phosphate + phosphate + H(+). Its function is as follows. Catalyzes the dephosphorylation of undecaprenyl diphosphate (UPP). Confers resistance to bacitracin. The protein is Undecaprenyl-diphosphatase of Lacticaseibacillus casei (strain BL23) (Lactobacillus casei).